The chain runs to 188 residues: dCTP deaminase (188 aa).

DCTP contacts are provided by residues 111–116 (KSTYAR), 135–137 (TLE), glutamine 156, tyrosine 170, and glutamine 180. The active-site Proton donor/acceptor is glutamate 137.

It belongs to the dCTP deaminase family. Homotrimer.

The catalysed reaction is dCTP + H2O + H(+) = dUTP + NH4(+). It functions in the pathway pyrimidine metabolism; dUMP biosynthesis; dUMP from dCTP (dUTP route): step 1/2. In terms of biological role, catalyzes the deamination of dCTP to dUTP. This is dCTP deaminase from Acidovorax sp. (strain JS42).